Consider the following 97-residue polypeptide: Sm-like protein LSM3A (97 aa).

N-acetylserine is present on Ser-2. Residues 11–96 enclose the Sm domain; the sequence is EPLDLIRLSI…VILVSPPLRT (86 aa).

The protein belongs to the snRNP Sm proteins family. In terms of assembly, component of the heptameric LSM1-LSM7 complex that forms a seven-membered ring structure with a donut shape. The LSM subunits are arranged in the order LSM1, LSM2, LSM3, LSM6, LSM5, LSM7 and LSM4. Component of the heptameric LSM2-LSM8 complex that forms a seven-membered ring structure with a donut shape. The LSM subunits are arranged in the order LSM8, LSM2, LSM3, LSM6, LSM5, LSM7 and LSM4. LSM3A subunit interacts only with its two neighboring subunits, LSM2 and LSM6A or LSM6B. In terms of tissue distribution, expressed in roots, leaves, stems, flowers and siliques.

The protein resides in the cytoplasm. It is found in the nucleus. Component of LSM protein complexes, which are involved in RNA processing. Component of the cytoplasmic LSM1-LSM7 complex which is involved in mRNA degradation by promoting decapping and leading to accurate 5'-3' mRNA decay. The cytoplasmic LSM1-LSM7 complex regulates developmental gene expression by the decapping of specific development-related transcripts. Component of the nuclear LSM2-LSM8 complex which is involved splicing nuclear mRNAs. LSM2-LSM8 binds directly to the U6 small nuclear RNAs (snRNAs) and is essential for accurate splicing of selected development-related mRNAs through the stabilization of the spliceosomal U6 snRNA. Plays a critical role in the regulation of development-related gene expression. The polypeptide is Sm-like protein LSM3A (Arabidopsis thaliana (Mouse-ear cress)).